A 463-amino-acid chain; its full sequence is Thiamine-repressible acid phosphatase pho4 (463 aa).

The first 18 residues, 1–18, serve as a signal peptide directing secretion; the sequence is MKLSGISLWLLAASIVHA. The active-site Nucleophile is the histidine 69. N-linked (GlcNAc...) asparagine glycosylation is found at asparagine 98, asparagine 104, asparagine 186, asparagine 221, asparagine 251, and asparagine 328. Aspartate 341 (proton donor) is an active-site residue. Residues asparagine 433, asparagine 439, and asparagine 458 are each glycosylated (N-linked (GlcNAc...) asparagine).

The protein belongs to the histidine acid phosphatase family.

The protein localises to the secreted. Its subcellular location is the cell wall. It carries out the reaction a phosphate monoester + H2O = an alcohol + phosphate. Its function is as follows. May dephosphorylate thiamine phosphates. This chain is Thiamine-repressible acid phosphatase pho4 (pho4), found in Schizosaccharomyces pombe (strain 972 / ATCC 24843) (Fission yeast).